Reading from the N-terminus, the 261-residue chain is Receptor expression-enhancing protein 4 (261 aa).

Transmembrane regions (helical) follow at residues Met-1 to Tyr-21 and Tyr-35 to Thr-55. The interval Glu-177–Asn-261 is disordered. A compositionally biased stretch (basic and acidic residues) spans Ala-191–Asp-202.

This sequence belongs to the DP1 family. As to quaternary structure, interacts with microtubules. During gastrulation, expressed on the dorsal side of the embryo and then in the neural plate and neural tube. At tailbud stages, expressed in the somites. Expressed in the neural tube later in development.

Its subcellular location is the endoplasmic reticulum membrane. Functionally, microtubule-binding protein required to ensure proper cell division and nuclear envelope reassembly by sequestering the endoplasmic reticulum away from chromosomes during mitosis. Probably acts by clearing the endoplasmic reticulum membrane from metaphase chromosomes. May play a role in the maintenance of both the nervous system and the musculature. This Xenopus tropicalis (Western clawed frog) protein is Receptor expression-enhancing protein 4 (reep4).